Here is a 292-residue protein sequence, read N- to C-terminus: UPF0761 membrane protein Ping_3482 (292 aa).

6 consecutive transmembrane segments (helical) span residues 43–63 (LLSI…FPVF), 100–120 (MSMM…STID), 139–159 (FTIY…SLAL), 179–199 (LLSL…YTLV), 209–229 (ALIG…LFRL), and 243–263 (ALAV…IVLI).

This sequence belongs to the UPF0761 family.

It localises to the cell inner membrane. The sequence is that of UPF0761 membrane protein Ping_3482 from Psychromonas ingrahamii (strain DSM 17664 / CCUG 51855 / 37).